The following is a 215-amino-acid chain: Heart- and neural crest derivatives-expressed protein 1 (215 aa).

Disordered stretches follow at residues 53-109 and 166-198; these read APDF…RTES and LKKA…EKRI. The segment covering 65 to 89 has biased composition (low complexity); the sequence is AAAAATAYGPDARPGQSPGRLEALG. The segment covering 92-104 has biased composition (basic residues); that stretch reads LGRRKGSGPKKER. Positions 94-146 constitute a bHLH domain; it reads RRKGSGPKKERRRTESINSAFAELRECIPNVPADTKLSKIKTLRLATSYIAYL. A Phosphothreonine; by PLK4 modification is found at threonine 107. Serine 109 is modified (phosphoserine; by PLK4).

As to quaternary structure, efficient DNA binding requires dimerization with another bHLH protein. Forms homodimers and heterodimers with TCF3 gene products E12 and E47, HAND2 and HEY1, HEY2 and HEYL (hairy-related transcription factors). Interacts with MDFIC. Interacts with SOX15; the interaction enhances HAND1-induced differentiation of trophoblast giant cells. In terms of processing, phosphorylation by PLK4 disrupts the interaction with MDFIC and leads to translocation into the nucleoplasm, allowing dimerization and transcription factor activity. Heart.

It localises to the nucleus. The protein localises to the nucleoplasm. It is found in the nucleolus. In terms of biological role, transcription factor that plays an essential role in both trophoblast giant cell differentiation and in cardiac morphogenesis. Binds the DNA sequence 5'-NRTCTG-3' (non-canonical E-box). Acts as a transcriptional repressor of SOX15. In the adult, could be required for ongoing expression of cardiac-specific genes. The chain is Heart- and neural crest derivatives-expressed protein 1 (HAND1) from Homo sapiens (Human).